Reading from the N-terminus, the 439-residue chain is GTPase Der (439 aa).

EngA-type G domains are found at residues 4–166 (PIVA…PAQD) and 175–350 (IRIA…EEAS). Residues 10–17 (GRPNVGKS), 57–61 (DTGGL), 119–122 (NKVE), 181–188 (GRPNVGKS), 228–232 (DTAGM), and 293–296 (NKWD) contribute to the GTP site. A KH-like domain is found at 351 to 435 (KRVATADLNN…PIRFFLRKRE (85 aa)).

It belongs to the TRAFAC class TrmE-Era-EngA-EngB-Septin-like GTPase superfamily. EngA (Der) GTPase family. In terms of assembly, associates with the 50S ribosomal subunit.

GTPase that plays an essential role in the late steps of ribosome biogenesis. In Desulforamulus reducens (strain ATCC BAA-1160 / DSM 100696 / MI-1) (Desulfotomaculum reducens), this protein is GTPase Der.